A 970-amino-acid polypeptide reads, in one-letter code: N-alpha-acetyltransferase 25, NatB auxiliary subunit (970 aa).

TPR repeat units follow at residues 11–44 (NDRR…HRDL), 45–78 (HCAK…EPTD), 79–112 (DNSL…VPNS), and 114–146 (EYHS…VPKN).

Belongs to the MDM20/NAA25 family. In terms of assembly, component of the N-terminal acetyltransferase B (NatB) complex which is composed of NAA20 and NAA25.

It is found in the cytoplasm. Non-catalytic subunit of the NatB complex which catalyzes acetylation of the N-terminal methionine residues of peptides beginning with Met-Asp, Met-Glu, Met-Asn and Met-Gln. May play a role in normal cell-cycle progression. The chain is N-alpha-acetyltransferase 25, NatB auxiliary subunit (Naa25) from Rattus norvegicus (Rat).